Here is a 1368-residue protein sequence, read N- to C-terminus: DNA-directed RNA polymerase subunit beta (1368 aa).

Belongs to the RNA polymerase beta chain family. In terms of assembly, the RNAP catalytic core consists of 2 alpha, 1 beta, 1 beta' and 1 omega subunit. When a sigma factor is associated with the core the holoenzyme is formed, which can initiate transcription.

The catalysed reaction is RNA(n) + a ribonucleoside 5'-triphosphate = RNA(n+1) + diphosphate. DNA-dependent RNA polymerase catalyzes the transcription of DNA into RNA using the four ribonucleoside triphosphates as substrates. This is DNA-directed RNA polymerase subunit beta from Burkholderia ambifaria (strain ATCC BAA-244 / DSM 16087 / CCUG 44356 / LMG 19182 / AMMD) (Burkholderia cepacia (strain AMMD)).